We begin with the raw amino-acid sequence, 29 residues long: Toxin Bl-4 (29 aa).

It belongs to the long (4 C-C) scorpion toxin superfamily. Sodium channel inhibitor family. Beta subfamily. Expressed by the venom gland.

The protein resides in the secreted. Functionally, excitatory insect beta-toxins induce a spastic paralysis. They bind voltage-independently at site-4 of sodium channels (Nav) and shift the voltage of activation toward more negative potentials thereby affecting sodium channel activation and promoting spontaneous and repetitive firing. The fraction to which this protein belongs exhibits low toxicity and induces transient paralysis in all insects tested (the crickets A.domesticus). The sequence is that of Toxin Bl-4 from Buthacus leptochelys (Egyptian fat-tailed scorpion).